Consider the following 388-residue polypeptide: Dual-specificity RNA methyltransferase RlmN (388 aa).

Glu-109 (proton acceptor) is an active-site residue. The 240-residue stretch at 115-354 (EDDRATLCVS…TIVRKTRGDD (240 aa)) folds into the Radical SAM core domain. Cys-122 and Cys-359 are disulfide-bonded. [4Fe-4S] cluster-binding residues include Cys-129, Cys-133, and Cys-136. Residues 183–184 (GE), Ser-215, 237–239 (SLH), and Asn-316 each bind S-adenosyl-L-methionine. Cys-359 functions as the S-methylcysteine intermediate in the catalytic mechanism.

It belongs to the radical SAM superfamily. RlmN family. Requires [4Fe-4S] cluster as cofactor.

The protein resides in the cytoplasm. It carries out the reaction adenosine(2503) in 23S rRNA + 2 reduced [2Fe-2S]-[ferredoxin] + 2 S-adenosyl-L-methionine = 2-methyladenosine(2503) in 23S rRNA + 5'-deoxyadenosine + L-methionine + 2 oxidized [2Fe-2S]-[ferredoxin] + S-adenosyl-L-homocysteine. The enzyme catalyses adenosine(37) in tRNA + 2 reduced [2Fe-2S]-[ferredoxin] + 2 S-adenosyl-L-methionine = 2-methyladenosine(37) in tRNA + 5'-deoxyadenosine + L-methionine + 2 oxidized [2Fe-2S]-[ferredoxin] + S-adenosyl-L-homocysteine. Functionally, specifically methylates position 2 of adenine 2503 in 23S rRNA and position 2 of adenine 37 in tRNAs. m2A2503 modification seems to play a crucial role in the proofreading step occurring at the peptidyl transferase center and thus would serve to optimize ribosomal fidelity. The protein is Dual-specificity RNA methyltransferase RlmN of Salmonella arizonae (strain ATCC BAA-731 / CDC346-86 / RSK2980).